The following is a 523-amino-acid chain: Cyclic di-GMP binding protein BcsE (523 aa).

It belongs to the BcsE family.

Its function is as follows. Required for cellulose biosynthesis. May have protease activity, but BcsA is not targeted. Binds bis-(3'-5') cyclic diguanylic acid (c-di-GMP). The chain is Cyclic di-GMP binding protein BcsE from Salmonella typhimurium (strain LT2 / SGSC1412 / ATCC 700720).